The primary structure comprises 688 residues: Methionine--tRNA ligase (688 aa).

A 'HIGH' region motif is present at residues 13-23 (PYANGNFHIGH). Zn(2+) is bound by residues Cys144, Cys147, Cys157, and Cys160. Residues 342–346 (KMSKS) carry the 'KMSKS' region motif. Residue Lys345 coordinates ATP. The tRNA-binding domain occupies 582 to 688 (DFAKVDLRIA…PGAQPGMRIH (107 aa)).

The protein belongs to the class-I aminoacyl-tRNA synthetase family. MetG type 1 subfamily. In terms of assembly, homodimer. Zn(2+) is required as a cofactor.

The protein localises to the cytoplasm. The catalysed reaction is tRNA(Met) + L-methionine + ATP = L-methionyl-tRNA(Met) + AMP + diphosphate. Is required not only for elongation of protein synthesis but also for the initiation of all mRNA translation through initiator tRNA(fMet) aminoacylation. The sequence is that of Methionine--tRNA ligase from Acidovorax sp. (strain JS42).